Here is a 441-residue protein sequence, read N- to C-terminus: Transcription factor bHLH90 (441 aa).

A bHLH domain is found at 260 to 309 (NFKSKNLHSERKRRERINQAMYGLRAVVPKITKLNKIGIFSDAVDYINEL).

As to quaternary structure, homodimer. As to expression, expressed constitutively in roots, leaves, stems, and flowers.

It is found in the nucleus. The polypeptide is Transcription factor bHLH90 (BHLH90) (Arabidopsis thaliana (Mouse-ear cress)).